Consider the following 359-residue polypeptide: ATP synthase subunit gamma, chloroplastic (359 aa).

A chloroplast-targeting transit peptide spans M1–R35. Residue C124 is part of the active site. The cysteines at positions 234 and 240 are disulfide-linked.

The protein belongs to the ATPase gamma chain family. F-type ATPases have 2 components, CF(1) - the catalytic core - and CF(0) - the membrane proton channel. CF(1) has five subunits: alpha(3), beta(3), gamma(1), delta(1), epsilon(1). CF(0) has four main subunits: a, b, b' and c.

It is found in the plastid. The protein localises to the chloroplast thylakoid membrane. Produces ATP from ADP in the presence of a proton gradient across the membrane. The gamma chain is believed to be important in regulating ATPase activity and the flow of protons through the CF(0) complex. Functionally, inceptin is a proteolytic fragment produced by insect larvae that previously ingested the protein. This peptide mediate plant perception of herbivory through the induction of volatile, phenylpropanoid and protease inhibitor defenses such as ethylene, jasmonic acid and salicylic acid for example. The chain is ATP synthase subunit gamma, chloroplastic from Zea mays (Maize).